Consider the following 199-residue polypeptide: Protein ASYMMETRIC LEAVES 2 (199 aa).

Residues 8–109 enclose the LOB domain; the sequence is SPCAACKFLR…IDLSCAKSEL (102 aa).

The protein belongs to the LOB domain-containing protein family. As to quaternary structure, homo- and heterodimer with AS1. Interacts with AS1. Part of the AS1 repressor complex composed of AS1, LBD6/AS2 and HDA6. Interacts with LFR. Expressed in young shoots, roots, stems, leaves, flowers and adaxial domains of cotyledonary and leaves primordia.

The protein resides in the nucleus. In terms of biological role, negative regulator of cell proliferation in the adaxial side of leaves. Regulates the formation of a symmetric lamina and the establishment of venation. Positively regulates LATERAL ORGAN BOUNDARIES (LOB) within the shoot apex, and the class III HD-ZIP genes REV, PHB, and PHV. Interacts directly with ASYMMETRIC LEAVES 1 (AS1) to repress the knox homeobox genes KNAT1, KNAT2, and KNAT6 and the abaxial determinants ARF3, KAN2 and YAB5. May act in parallel with the RDR6-SGS3-AGO7 pathway, an endogenous RNA silencing pathway, to regulate the leaf morphogenesis. Required for the binding of AS1 to the KNOX genes. Involved in leaf polarity establishment by functioning cooperatively with RH10 or RID2 to repress abaxial genes ARF3, ARF4, KAN1, KAN2, YAB1 and YAB5, and the knox homeobox genes KNAT1, KNAT2, KNAT6, and STM to promote adaxial development in leaf primordia at shoot apical meristems at high temperatures. This chain is Protein ASYMMETRIC LEAVES 2, found in Arabidopsis thaliana (Mouse-ear cress).